The following is a 548-amino-acid chain: Probable malate:quinone oxidoreductase (548 aa).

Residues 521 to 548 (DKPQAADSTPKPQLKPQPVQKEVADIAL) are disordered. Residues 530 to 541 (PKPQLKPQPVQK) are compositionally biased toward low complexity.

It belongs to the MQO family. It depends on FAD as a cofactor.

The catalysed reaction is (S)-malate + a quinone = a quinol + oxaloacetate. The protein operates within carbohydrate metabolism; tricarboxylic acid cycle; oxaloacetate from (S)-malate (quinone route): step 1/1. This chain is Probable malate:quinone oxidoreductase, found in Shigella sonnei (strain Ss046).